The primary structure comprises 179 residues: Inner membrane-spanning protein YciB (179 aa).

The next 5 helical transmembrane spans lie at 22–42, 50–70, 76–96, 121–141, and 149–169; these read IYAA…YSWV, MALI…FFHN, WKVT…QWVM, LAWA…AFWL, and FKVF…GIYI.

The protein belongs to the YciB family.

The protein resides in the cell inner membrane. In terms of biological role, plays a role in cell envelope biogenesis, maintenance of cell envelope integrity and membrane homeostasis. The protein is Inner membrane-spanning protein YciB of Klebsiella pneumoniae subsp. pneumoniae (strain ATCC 700721 / MGH 78578).